An 817-amino-acid polypeptide reads, in one-letter code: Dual specificity tyrosine-phosphorylation-regulated kinase mbk-2 (817 aa).

Disordered stretches follow at residues 1-46 (MAAL…HECP), 70-148 (PTSF…GPLG), 186-206 (GSYE…GSQQ), and 301-396 (LPNV…FRPE). Residues 7–25 (FTRNSRSYGQQPIDVTQQG) are compositionally biased toward polar residues. Composition is skewed to low complexity over residues 70-81 (PTSFSGASSSSS) and 97-111 (NLLG…SNSL). 2 stretches are compositionally biased toward polar residues: residues 122–143 (SGNT…TNNL) and 193–206 (GQAQ…GSQQ). The span at 303 to 318 (NVGTSSSNGSSNSSSG) shows a compositional bias: low complexity. Residues 327–351 (LMTQSIGGPNKHLSASHSTLNTAST) show a composition bias toward polar residues. Serine 362 carries the phosphoserine; by cdk-1 modification. Residues 364–392 (SNESLSRSHTSSSGGSQGGHNSNSGSNSG) show a composition bias toward low complexity. Residues 461–774 (YEVLKVIGKG…PAQALKHKWL (314 aa)) form the Protein kinase domain. ATP contacts are provided by residues 467 to 475 (IGKGSFGQV) and lysine 490. Catalysis depends on aspartate 587, which acts as the Proton acceptor. At tyrosine 621 the chain carries Phosphotyrosine; by autocatalysis.

It belongs to the protein kinase superfamily. CMGC Ser/Thr protein kinase family. MNB/DYRK subfamily. Part of a complex, consisting of pseudophosphatases egg-3, egg-4, egg-5 and kinase mbk-2; this complex is required for the oocyte-to-zygote transition. Interacts (via Tyr-619 and Tyr-621) with egg-4 (via tyrosine-protein phosphatase domain) and egg-5 (via tyrosine-protein phosphatase domain); mbk-2 tyrosine phosphorylation enhances the interaction. The interaction inhibits mbk-2 kinase activity and is required for mbk-2 oocyte cortex localization. Interacts (via N-terminus) with egg-3 (via tyrosine-protein phosphatase domain); the interaction does not affect mbk-2 kinase activity, is enhanced by mbk-2 tyrosine phosphorylation status and requires prior binding of mbk-2 to egg-4 and egg-5. It depends on Mg(2+) as a cofactor. Post-translationally, autophosphorylated. As to expression, in L1 larvae, expressed widely in the nervous system, including head neurons and the ventral nerve cord. In adult animals, continues to be expressed in the nervous system and is also expressed in body wall muscle.

It is found in the cytoplasm. The protein localises to the cell cortex. The catalysed reaction is L-seryl-[protein] + ATP = O-phospho-L-seryl-[protein] + ADP + H(+). It catalyses the reaction L-threonyl-[protein] + ATP = O-phospho-L-threonyl-[protein] + ADP + H(+). It carries out the reaction L-tyrosyl-[protein] + ATP = O-phospho-L-tyrosyl-[protein] + ADP + H(+). Activated during oocyte maturation by phosphorylation on Ser-362 by cdk-1. The pseudotyrosine phosphatases egg-4 and egg-5 sequester activated mbk-2 until the meiotic divisions and inhibit mbk-2 kinase activity directly, using a mixed-inhibition mechanism that does not involve tyrosine dephosphorylation. In terms of biological role, required for oocyte-to-zygote transition in which it phosphorylates oocyte proteins, including mei-1, oma-1, oma-2, mex-5, and mex-6, modifying their activity and/or stability following meiosis. Through phosphorylation of P granule components including meg-1, promotes the disassembly of zygotic P granules in the anterior cytoplasm during zygote polarization, and thus plays a role in P granule distribution and segregation in early stage embryos following meiosis. Functions in both spindle positioning and in the posterior localization of cytoplasmic determinants, including pie-1, pos-1, and pgl-1, in early embryos. Involved in the asymmetric distribution of plk-1 at the 2-cell embryonic stage. This is Dual specificity tyrosine-phosphorylation-regulated kinase mbk-2 from Caenorhabditis elegans.